The chain runs to 257 residues: GTP cyclohydrolase 1 type 2 homolog (257 aa).

Residues His65, Asp103, His221, and Glu224 each contribute to the a divalent metal cation site.

It belongs to the GTP cyclohydrolase I type 2/NIF3 family. Homohexamer.

This Lactococcus lactis subsp. lactis (strain IL1403) (Streptococcus lactis) protein is GTP cyclohydrolase 1 type 2 homolog (ykiD).